A 345-amino-acid polypeptide reads, in one-letter code: Phosphoribosylformylglycinamidine cyclo-ligase (345 aa).

Belongs to the AIR synthase family.

It localises to the cytoplasm. The catalysed reaction is 2-formamido-N(1)-(5-O-phospho-beta-D-ribosyl)acetamidine + ATP = 5-amino-1-(5-phospho-beta-D-ribosyl)imidazole + ADP + phosphate + H(+). It functions in the pathway purine metabolism; IMP biosynthesis via de novo pathway; 5-amino-1-(5-phospho-D-ribosyl)imidazole from N(2)-formyl-N(1)-(5-phospho-D-ribosyl)glycinamide: step 2/2. The sequence is that of Phosphoribosylformylglycinamidine cyclo-ligase from Chromobacterium violaceum (strain ATCC 12472 / DSM 30191 / JCM 1249 / CCUG 213 / NBRC 12614 / NCIMB 9131 / NCTC 9757 / MK).